Here is a 588-residue protein sequence, read N- to C-terminus: Dual specificity tyrosine-phosphorylation-regulated kinase 3 (588 aa).

The segment at 1–188 (MGGTARGPGR…HGVIGGPNNG (188 aa)) is disordered. Polar residues predominate over residues 97-134 (SNTIQSDGISDSEKCSPTVSQGKSSDCLNTVKSNSSSK). The 314-residue stretch at 209–522 (YEVLKIIGKG…PAQALRHPWI (314 aa)) folds into the Protein kinase domain. Residues 215 to 223 (IGKGSFGQV), K238, and 288 to 291 (FELL) contribute to the ATP site. D335 serves as the catalytic Proton acceptor. S350 is subject to Phosphoserine. Y369 is subject to Phosphotyrosine. Residues 468-481 (RSRRGKKRGPPGSK) carry the Nuclear localization signal motif.

This sequence belongs to the protein kinase superfamily. CMGC Ser/Thr protein kinase family. MNB/DYRK subfamily. In terms of assembly, interacts with SIRT1. Requires Mg(2+) as cofactor. Post-translationally, ubiquitinated at anaphase by the anaphase-promoting complex (APC/C), leading to its degradation by the proteasome. Protein kinase activity is activated following autophosphorylation at Tyr-369. Autophosphorylation at Ser-350 stabilizes the protein and enhances the protein kinase activity. Isoform 1: Highly expressed in testis and in hematopoietic tissue such as fetal liver, and bone marrow. Isoform 1: Predominant form in fetal liver and bone marrow. Isoform 1: Present at low levels in heart, pancreas, lymph node and thymus. Isoform 2: Highly expressed in testis and in hematopoietic tissue such as fetal liver, and bone marrow. Isoform 2: Predominant form in testis. Isoform 2: Present at low levels in heart, pancreas, lymph node and thymus.

The protein localises to the nucleus. It is found in the cytoplasm. Its subcellular location is the nucleus speckle. The protein resides in the cytoplasmic granule. It localises to the cytoskeleton. The protein localises to the microtubule organizing center. It is found in the centrosome. It catalyses the reaction L-seryl-[protein] + ATP = O-phospho-L-seryl-[protein] + ADP + H(+). It carries out the reaction L-threonyl-[protein] + ATP = O-phospho-L-threonyl-[protein] + ADP + H(+). The enzyme catalyses L-tyrosyl-[protein] + ATP = O-phospho-L-tyrosyl-[protein] + ADP + H(+). Protein kinase activity is activated following autophosphorylation at Tyr-369. Inhibited by harmine, an ATP competitive inhibitor. Inhibited by small-compound GSK-626616. Functionally, dual-specificity protein kinase that promotes disassembly of several types of membraneless organelles during mitosis, such as stress granules, nuclear speckles and pericentriolar material. Dual-specificity tyrosine-regulated kinases (DYRKs) autophosphorylate a critical tyrosine residue in their activation loop and phosphorylate their substrate on serine and threonine residues. Acts as a central dissolvase of membraneless organelles during the G2-to-M transition, after the nuclear-envelope breakdown: acts by mediating phosphorylation of multiple serine and threonine residues in unstructured domains of proteins, such as SRRM1 and PCM1. Does not mediate disassembly of all membraneless organelles: disassembly of P-body and nucleolus is not regulated by DYRK3. Dissolution of membraneless organelles at the onset of mitosis is also required to release mitotic regulators, such as ZNF207, from liquid-unmixed organelles where they are sequestered and keep them dissolved during mitosis. Regulates mTORC1 by mediating the dissolution of stress granules: during stressful conditions, DYRK3 partitions from the cytosol to the stress granule, together with mTORC1 components, which prevents mTORC1 signaling. When stress signals are gone, the kinase activity of DYRK3 is required for the dissolution of stress granule and mTORC1 relocation to the cytosol: acts by mediating the phosphorylation of the mTORC1 inhibitor AKT1S1, allowing full reactivation of mTORC1 signaling. Also acts as a negative regulator of EPO-dependent erythropoiesis: may place an upper limit on red cell production during stress erythropoiesis. Inhibits cell death due to cytokine withdrawal in hematopoietic progenitor cells. Promotes cell survival upon genotoxic stress through phosphorylation of SIRT1: this in turn inhibits p53/TP53 activity and apoptosis. In Homo sapiens (Human), this protein is Dual specificity tyrosine-phosphorylation-regulated kinase 3.